The following is a 713-amino-acid chain: Topoisomerase subunit TopoM (713 aa).

A Topo IIA-type catalytic domain is found at 41–504 (IPSAYDGLKP…DATPVSRGDE (464 aa)). Catalysis depends on Tyr-128, which acts as the O-(5'-phospho-DNA)-tyrosine intermediate. A disordered region spans residues 694-713 (NRAKASIKGSGADVTPAPAE).

Belongs to the type II topoisomerase GyrA/ParC subunit family. In terms of assembly, a complex of TopoN and TopoM, possibly a heterotetramer. It depends on Mg(2+) as a cofactor.

It carries out the reaction ATP-dependent breakage, passage and rejoining of double-stranded DNA.. With respect to regulation, inhibited by quinolone antibiotic ciprofloxacin and coumarin antibiotic novobiocin, but at much higher concentrations than is usual for DNA gyrase/topoisomerase. Its function is as follows. Catalyzes the relaxation of negatively supercoiled DNA in the presence of ATP or dATP but not other nucleotides. Individual subunits have no activity. Not able to negatively supercoil DNA, it can however introduce positive supercoils in DNA. Relaxes positive supercoils in an ATP-dependent manner. Catenates and decatenates DNA. Generates dsDNA breaks in the presence of the quinolone antibiotic ciprofloxacin, showing it is a topoisomerase. This Mycolicibacterium smegmatis (strain ATCC 700084 / mc(2)155) (Mycobacterium smegmatis) protein is Topoisomerase subunit TopoM.